The sequence spans 230 residues: Small ribosomal subunit protein uS3 (230 aa).

Positions 39-107 constitute a KH type-2 domain; that stretch reads VRKFLEKKLE…PAQINIAEIR (69 aa).

This sequence belongs to the universal ribosomal protein uS3 family. Part of the 30S ribosomal subunit. Forms a tight complex with proteins S10 and S14.

Functionally, binds the lower part of the 30S subunit head. Binds mRNA in the 70S ribosome, positioning it for translation. This is Small ribosomal subunit protein uS3 from Shewanella amazonensis (strain ATCC BAA-1098 / SB2B).